The chain runs to 439 residues: Probable eukaryotic translation initiation factor 5-1 (439 aa).

29 to 36 (GRGNGIKT) is a binding site for GTP. Residues 143 to 245 (LKNPPEQKKS…REAAEKRMKE (103 aa)) are disordered. Residues 147–186 (PEQKKSSKDKKSMRRAEKERLREGEAADEEMRKLKKEAAS) show a composition bias toward basic and acidic residues. Residues 214-228 (DENDQADSEEDDDDV) are compositionally biased toward acidic residues. The residue at position 232 (Thr232) is a Phosphothreonine. The segment covering 234–245 (TSREAAEKRMKE) has biased composition (basic and acidic residues). One can recognise a W2 domain in the interval 283-439 (KIPENAHEKL…QNAESESEEE (157 aa)). Residues Ser434 and Ser436 each carry the phosphoserine modification.

This sequence belongs to the eIF-2-beta/eIF-5 family.

Catalyzes the hydrolysis of GTP bound to the 40S ribosomal initiation complex (40S.mRNA.Met-tRNA[F].eIF-2.GTP) with the subsequent joining of a 60S ribosomal subunit resulting in the release of eIF-2 and the guanine nucleotide. The subsequent joining of a 60S ribosomal subunit results in the formation of a functional 80S initiation complex (80S.mRNA.Met-tRNA[F]). This chain is Probable eukaryotic translation initiation factor 5-1, found in Arabidopsis thaliana (Mouse-ear cress).